Here is a 119-residue protein sequence, read N- to C-terminus: MRKRNISLKSKIEIQKIFKEGKLIRFSNLNLKMFYKSNHLVYSRILVTFSKGFRGSVKRNRIRRLFKEAFRKRLELLEGIALDIIFVVSYSKLTLTYFSIESLMKGLVLRCERGIGESK.

The protein belongs to the RnpA family. Consists of a catalytic RNA component (M1 or rnpB) and a protein subunit.

The enzyme catalyses Endonucleolytic cleavage of RNA, removing 5'-extranucleotides from tRNA precursor.. Functionally, RNaseP catalyzes the removal of the 5'-leader sequence from pre-tRNA to produce the mature 5'-terminus. It can also cleave other RNA substrates such as 4.5S RNA. The protein component plays an auxiliary but essential role in vivo by binding to the 5'-leader sequence and broadening the substrate specificity of the ribozyme. The sequence is that of Ribonuclease P protein component from Borreliella burgdorferi (strain ZS7) (Borrelia burgdorferi).